The primary structure comprises 357 residues: Glutamine synthetase cytosolic isozyme (357 aa).

The 81-residue stretch at 20–100 folds into the GS beta-grasp domain; that stretch reads VIAEYIWIGG…VICDAYSPNG (81 aa). Positions 107-357 constitute a GS catalytic domain; sequence KRAAAAKIFN…IAETTILWKP (251 aa).

Belongs to the glutamine synthetase family. In terms of assembly, homooctamer.

The protein resides in the cytoplasm. The catalysed reaction is L-glutamate + NH4(+) + ATP = L-glutamine + ADP + phosphate + H(+). This chain is Glutamine synthetase cytosolic isozyme, found in Pinus sylvestris (Scotch pine).